The primary structure comprises 301 residues: Phosphate transport system permease protein PstA 2 (301 aa).

6 helical membrane passes run 36–56 (ACVCCLAVVITPTLWMLIGVV), 83–103 (IIGTAVLAIGVILVGGTVSVL), 127–147 (LSGIPSIVLGYVGYLALVVYF), 149–169 (WGFSLAAGVLVLSVMSIPYIA), 209–229 (GIVTGMLVALALAIGETAPLL), and 274–294 (ALLLIVFLLLLIFIGRLINWL). Residues 83–288 (IIGTAVLAIG…VFLLLLIFIG (206 aa)) form the ABC transmembrane type-1 domain.

It belongs to the binding-protein-dependent transport system permease family. CysTW subfamily.

The protein localises to the cell membrane. In terms of biological role, part of the binding-protein-dependent transport system for phosphate; probably responsible for the translocation of the substrate across the membrane. The sequence is that of Phosphate transport system permease protein PstA 2 (pstA2) from Mycobacterium bovis (strain ATCC BAA-935 / AF2122/97).